The chain runs to 156 residues: Perlucin-like protein (156 aa).

The N-terminal stretch at 1 to 22 (MGKLTVVGILTLFIFYIVAASG) is a signal peptide. 3 cysteine pairs are disulfide-bonded: Cys-30–Cys-41, Cys-58–Cys-156, and Cys-131–Cys-147. One can recognise a C-type lectin domain in the interval 37-156 (YKTNCYFFSP…CNTDQMGYIC (120 aa)).

As to expression, component of the organic matrix of calcified shell layers like nacre and prisms.

The protein localises to the secreted. The chain is Perlucin-like protein from Mytilus galloprovincialis (Mediterranean mussel).